Consider the following 222-residue polypeptide: Mediator of RNA polymerase II transcription subunit 7 (222 aa).

The segment at Tyr34 to Glu55 is disordered. A compositionally biased stretch (polar residues) spans Ala42–Gly53.

The protein belongs to the Mediator complex subunit 7 family. As to quaternary structure, component of the Mediator complex, which is composed of at least 21 subunits that form three structurally distinct submodules. The Mediator head module contains MED6, MED8, MED11, SRB4/MED17, SRB5/MED18, ROX3/MED19, SRB2/MED20 and SRB6/MED22, the middle module contains MED1, MED4, NUT1/MED5, MED7, CSE2/MED9, NUT2/MED10, SRB7/MED21 and SOH1/MED31, and the tail module contains MED2, PGD1/MED3, RGR1/MED14, GAL11/MED15 and SIN4/MED16. The head and the middle modules interact directly with RNA polymerase II, whereas the elongated tail module interacts with gene-specific regulatory proteins. MED7 interacts directly with MED1, MED4 and SRB7/MED21.

The protein resides in the nucleus. In terms of biological role, component of the Mediator complex, a coactivator involved in the regulated transcription of nearly all RNA polymerase II-dependent genes. Mediator functions as a bridge to convey information from gene-specific regulatory proteins to the basal RNA polymerase II transcription machinery. The Mediator complex, having a compact conformation in its free form, is recruited to promoters by direct interactions with regulatory proteins and serves for the assembly of a functional preinitiation complex with RNA polymerase II and the general transcription factors. The Mediator complex unfolds to an extended conformation and partially surrounds RNA polymerase II, specifically interacting with the unphosphorylated form of the C-terminal domain (CTD) of RNA polymerase II. The Mediator complex dissociates from the RNA polymerase II holoenzyme and stays at the promoter when transcriptional elongation begins. In Saccharomyces cerevisiae (strain ATCC 204508 / S288c) (Baker's yeast), this protein is Mediator of RNA polymerase II transcription subunit 7 (MED7).